The following is a 246-amino-acid chain: tRNA (guanine-N(1)-)-methyltransferase (246 aa).

Residues Gly-114 and 133–138 (LGDYVL) each bind S-adenosyl-L-methionine.

This sequence belongs to the RNA methyltransferase TrmD family. Homodimer.

The protein localises to the cytoplasm. The enzyme catalyses guanosine(37) in tRNA + S-adenosyl-L-methionine = N(1)-methylguanosine(37) in tRNA + S-adenosyl-L-homocysteine + H(+). Its function is as follows. Specifically methylates guanosine-37 in various tRNAs. The polypeptide is tRNA (guanine-N(1)-)-methyltransferase (Enterococcus faecalis (strain ATCC 700802 / V583)).